Consider the following 206-residue polypeptide: CASP-like protein 4B2 (206 aa).

Low complexity-rich tracts occupy residues Met-1 to Ala-12 and Ser-24 to Ala-36. Positions Met-1–Gly-42 are disordered. Topologically, residues Met-1–Lys-60 are cytoplasmic. The chain crosses the membrane as a helical span at residues Ser-61–Ala-81. Topologically, residues Ser-82–Tyr-99 are extracellular. A helical transmembrane segment spans residues Leu-100–Leu-120. Over Arg-121–Asp-138 the chain is Cytoplasmic. Residues Phe-139–Ile-159 traverse the membrane as a helical segment. At Thr-160–Thr-174 the chain is on the extracellular side. The chain crosses the membrane as a helical span at residues Thr-175–Val-195. Residues Ser-196 to Met-206 lie on the Cytoplasmic side of the membrane.

The protein belongs to the Casparian strip membrane proteins (CASP) family. As to quaternary structure, homodimer and heterodimers.

It localises to the cell membrane. In Oryza sativa subsp. japonica (Rice), this protein is CASP-like protein 4B2.